Here is a 141-residue protein sequence, read N- to C-terminus: Flagellar assembly factor FliW (141 aa).

It belongs to the FliW family. As to quaternary structure, interacts with translational regulator CsrA and flagellin(s).

Its subcellular location is the cytoplasm. Its function is as follows. Acts as an anti-CsrA protein, binds CsrA and prevents it from repressing translation of its target genes, one of which is flagellin. Binds to flagellin and participates in the assembly of the flagellum. This is Flagellar assembly factor FliW from Clostridium beijerinckii (strain ATCC 51743 / NCIMB 8052) (Clostridium acetobutylicum).